The sequence spans 462 residues: MDAMQKTIEYTSVSRIAGPLMVIDGIEGVAYGEIVDITTPNGEKRTGQVLEAREEIAVVQVFEGTSELNTSETKVRFTGDTAKIGVSYDMLGRIFNGAGKPLDGGPEIIAEKKLDINGYPLNPVSRNPPNAFVQTGISTIDGTNTLVRGQKIPIFSGSGLPHNKLATQIARQAKVRGEGEQFAVVFAAMGITGEESNYFMDEFKKTGALEKAVVFINLADDPAIERILTPRIALTTAEYLAYEKGMHVLVILTDLTNYCEALREIAAARNEVPGRRGYPGYMYTDLACLYERAGRVKGREGTVTQIPILTMPDDDITHPIPDLTGYITEGQIVLSRELNRKGIYPPVDILPSLSRLAGNGQGEGKTRDDHSKVISQAYAAYAEGRGLRDLVAVVGEEALTERDRSFLKFADAFENSIVTQGVDEDRSIEETLDYVWDLLTILPREELKRVSDELIEKYLPKK.

The protein belongs to the ATPase alpha/beta chains family. In terms of assembly, has multiple subunits with at least A(3), B(3), C, D, E, F, H, I and proteolipid K(x).

Its subcellular location is the cell membrane. In terms of biological role, component of the A-type ATP synthase that produces ATP from ADP in the presence of a proton gradient across the membrane. The B chain is a regulatory subunit. This chain is A-type ATP synthase subunit B, found in Methanococcus maripaludis (strain C6 / ATCC BAA-1332).